A 98-amino-acid chain; its full sequence is NADH-quinone oxidoreductase subunit K (98 aa).

A run of 3 helical transmembrane segments spans residues 1 to 21 (MGHL…GIFL), 27 to 47 (IVLL…FIAF), and 59 to 79 (FVFF…AILV).

The protein belongs to the complex I subunit 4L family. NDH-1 is composed of 14 different subunits. Subunits NuoA, H, J, K, L, M, N constitute the membrane sector of the complex.

The protein resides in the cell inner membrane. The enzyme catalyses a quinone + NADH + 5 H(+)(in) = a quinol + NAD(+) + 4 H(+)(out). Functionally, NDH-1 shuttles electrons from NADH, via FMN and iron-sulfur (Fe-S) centers, to quinones in the respiratory chain. The immediate electron acceptor for the enzyme in this species is believed to be ubiquinone. Couples the redox reaction to proton translocation (for every two electrons transferred, four hydrogen ions are translocated across the cytoplasmic membrane), and thus conserves the redox energy in a proton gradient. The sequence is that of NADH-quinone oxidoreductase subunit K from Xanthomonas oryzae pv. oryzae (strain PXO99A).